Consider the following 535-residue polypeptide: uncharacterized protein (535 aa).

A run of 6 helical transmembrane segments spans residues 55 to 75, 82 to 102, 115 to 135, 143 to 163, 201 to 221, and 346 to 366; these read LITI…IPII, FMPV…IMFV, IICF…ILRH, AFVL…LMLF, STIL…TLIM, and VSGP…NVFA.

The protein localises to the membrane. This is an uncharacterized protein from Schizosaccharomyces pombe (strain 972 / ATCC 24843) (Fission yeast).